The following is a 147-amino-acid chain: Ubiquitin-conjugating enzyme E2 D4 (147 aa).

Residues 1-147 enclose the UBC core domain; that stretch reads MALKRIQKEL…AREWTQKYAM (147 aa). The active-site Glycyl thioester intermediate is the Cys85.

It belongs to the ubiquitin-conjugating enzyme family. Interacts with map3k10/mlk2. As to expression, at embryonic stages 28 to 35, expressed in the somites, eye primordia, otic vesicle and branchial arches. By stage 35, also weakly expressed in the pronephros.

The enzyme catalyses S-ubiquitinyl-[E1 ubiquitin-activating enzyme]-L-cysteine + [E2 ubiquitin-conjugating enzyme]-L-cysteine = [E1 ubiquitin-activating enzyme]-L-cysteine + S-ubiquitinyl-[E2 ubiquitin-conjugating enzyme]-L-cysteine.. The protein operates within protein modification; protein ubiquitination. In terms of biological role, catalyzes the covalent attachment of ubiquitin to other proteins. Regulates pronephros development, possibly by promoting ubiquitination and thus inactivation or degradation of map3k10/mlk2. This is Ubiquitin-conjugating enzyme E2 D4 (ube2d4) from Xenopus laevis (African clawed frog).